Consider the following 101-residue polypeptide: Ubiquitin-related modifier 1 homolog 1 (101 aa).

Gly-101 carries the post-translational modification 1-thioglycine. A Glycyl lysine isopeptide (Gly-Lys) (interchain with K-? in acceptor proteins) cross-link involves residue Gly-101.

Belongs to the URM1 family. C-terminal thiocarboxylation occurs in 2 steps, it is first acyl-adenylated (-COAMP) via the hesA/moeB/thiF part of the MOCS3 homolog, then thiocarboxylated (-COSH) via the rhodanese domain of the MOCS3 homolog.

Its subcellular location is the cytoplasm. The protein operates within tRNA modification; 5-methoxycarbonylmethyl-2-thiouridine-tRNA biosynthesis. Functionally, acts as a sulfur carrier required for 2-thiolation of mcm(5)S(2)U at tRNA wobble positions of cytosolic tRNA(Lys), tRNA(Glu) and tRNA(Gln). Serves as sulfur donor in tRNA 2-thiolation reaction by being thiocarboxylated (-COSH) at its C-terminus by MOCS3. The sulfur is then transferred to tRNA to form 2-thiolation of mcm(5)S(2)U. Also acts as a ubiquitin-like protein (UBL) that is covalently conjugated via an isopeptide bond to lysine residues of target proteins. The thiocarboxylated form serves as substrate for conjugation and oxidative stress specifically induces the formation of UBL-protein conjugates. This is Ubiquitin-related modifier 1 homolog 1 from Arabidopsis thaliana (Mouse-ear cress).